The following is a 402-amino-acid chain: Cysteine-rich venom protein (402 aa).

Residues 1 to 13 (MNLALFIIFATIF) form the signal peptide. The SCP domain maps to 57 to 199 (LETHNQLRNK…VKKVLYTCNY (143 aa)).

The protein belongs to the CRISP family. Contains 7 disulfide bonds. Expressed by the venom gland.

It is found in the secreted. This is Cysteine-rich venom protein from Tityus serrulatus (Brazilian scorpion).